A 107-amino-acid chain; its full sequence is MAQEFVNCKIQSGKVVVFIKPTCPYCRKTQEILSQLPFKQGLLEFVDITATNNTSAIQDYLQQLTGARTVPRVFIGKDCIGGCSDLISMQQTGELMTRLKQIGALQL.

At alanine 2 the chain carries N-acetylalanine. The Glutaredoxin domain occupies 3–106 (QEFVNCKIQS…TRLKQIGALQ (104 aa)). Lysine 9 is subject to N6-succinyllysine. Disulfide bonds link cysteine 23–cysteine 26 and cysteine 79–cysteine 83.

Belongs to the glutaredoxin family.

The protein resides in the cytoplasm. Has a glutathione-disulfide oxidoreductase activity in the presence of NADPH and glutathione reductase. Reduces low molecular weight disulfides and proteins. The chain is Glutaredoxin-1 (Glrx) from Mus musculus (Mouse).